The following is a 99-amino-acid chain: Turripeptide OL71 (99 aa).

In terms of processing, contains 5 disulfide bonds. As to expression, expressed by the venom duct.

Its subcellular location is the secreted. Functionally, acts as a neurotoxin by inhibiting an ion channel. The protein is Turripeptide OL71 of Iotyrris olangoensis (Sea snail).